We begin with the raw amino-acid sequence, 99 residues long: Putative transmembrane protein ORF13 (99 aa).

3 helical membrane-spanning segments follow: residues 8 to 28, 42 to 62, and 73 to 93; these read IATFGIGDTVTTIIGLSMAGI, LGLFGIIAAKVLYFGLMYIIV, and GPITITVLGTLICLWNIAIIA.

The protein resides in the host membrane. This is Putative transmembrane protein ORF13 from His1 virus (isolate Australia/Victoria) (His1V).